The following is a 280-amino-acid chain: Sulfur carrier protein FdhD (280 aa).

Cys121 serves as the catalytic Cysteine persulfide intermediate. Residue Phe258–Arg263 coordinates Mo-bis(molybdopterin guanine dinucleotide).

The protein belongs to the FdhD family.

The protein localises to the cytoplasm. In terms of biological role, required for formate dehydrogenase (FDH) activity. Acts as a sulfur carrier protein that transfers sulfur from IscS to the molybdenum cofactor prior to its insertion into FDH. The sequence is that of Sulfur carrier protein FdhD from Cronobacter sakazakii (strain ATCC BAA-894) (Enterobacter sakazakii).